The sequence spans 142 residues: MSESLVVCDVAEDLVEKLRKFRFRKETHNAAIIMKIDKDERLVVLDEELEGVSPDELKDELPERQPRFIVYSYKYQHDDGRVSYPLCFIFSSPVGCKPEQQMMYAGSKNKLVQTAELTKVFEIRNTEDLTEEWLREKLGFFH.

N-acetylserine is present on S2. The region spanning 4–139 (SLVVCDVAED…TEEWLREKLG (136 aa)) is the ADF-H domain.

Belongs to the actin-binding proteins ADF family. GMF subfamily. Post-translationally, phosphorylated; stimulated by phorbol ester.

In terms of biological role, this protein causes differentiation of brain cells, stimulation of neural regeneration, and inhibition of proliferation of tumor cells. In Mus musculus (Mouse), this protein is Glia maturation factor beta (Gmfb).